Reading from the N-terminus, the 150-residue chain is Protein-export protein SecB (150 aa).

Belongs to the SecB family. In terms of assembly, homotetramer, a dimer of dimers. One homotetramer interacts with 1 SecA dimer.

It localises to the cytoplasm. One of the proteins required for the normal export of preproteins out of the cell cytoplasm. It is a molecular chaperone that binds to a subset of precursor proteins, maintaining them in a translocation-competent state. It also specifically binds to its receptor SecA. This Chromobacterium violaceum (strain ATCC 12472 / DSM 30191 / JCM 1249 / CCUG 213 / NBRC 12614 / NCIMB 9131 / NCTC 9757 / MK) protein is Protein-export protein SecB.